Reading from the N-terminus, the 239-residue chain is Orotidine 5'-phosphate decarboxylase (239 aa).

Substrate contacts are provided by residues Asp-10, Lys-32, 59 to 68 (DLKLHDIPNT), Thr-122, Arg-184, Gln-193, Gly-213, and Arg-214. Catalysis depends on Lys-61, which acts as the Proton donor.

The protein belongs to the OMP decarboxylase family. Type 1 subfamily. As to quaternary structure, homodimer.

It catalyses the reaction orotidine 5'-phosphate + H(+) = UMP + CO2. The protein operates within pyrimidine metabolism; UMP biosynthesis via de novo pathway; UMP from orotate: step 2/2. Its function is as follows. Catalyzes the decarboxylation of orotidine 5'-monophosphate (OMP) to uridine 5'-monophosphate (UMP). The protein is Orotidine 5'-phosphate decarboxylase of Geobacillus thermodenitrificans (strain NG80-2).